A 403-amino-acid polypeptide reads, in one-letter code: L-cysteine:1D-myo-inositol 2-amino-2-deoxy-alpha-D-glucopyranoside ligase (403 aa).

Position 43 (Cys-43) interacts with Zn(2+). L-cysteinyl-5'-AMP-binding positions include 43–46 (CGIT), Thr-58, and 81–83 (NTT). A 'HIGH' region motif is present at residues 45–55 (ITPYDATHLGH). Residues 183–188 (ERGGDP) carry the 'ERGGDP' region motif. Trp-223 lines the L-cysteinyl-5'-AMP pocket. Cys-227 is a binding site for Zn(2+). 245–247 (GSD) contacts L-cysteinyl-5'-AMP. Residue His-252 participates in Zn(2+) binding. Residue Val-279 coordinates L-cysteinyl-5'-AMP. A 'KMSKS' region motif is present at residues 285–289 (KMSKS).

This sequence belongs to the class-I aminoacyl-tRNA synthetase family. MshC subfamily. Monomer. The cofactor is Zn(2+).

It catalyses the reaction 1D-myo-inositol 2-amino-2-deoxy-alpha-D-glucopyranoside + L-cysteine + ATP = 1D-myo-inositol 2-(L-cysteinylamino)-2-deoxy-alpha-D-glucopyranoside + AMP + diphosphate + H(+). In terms of biological role, catalyzes the ATP-dependent condensation of GlcN-Ins and L-cysteine to form L-Cys-GlcN-Ins. This chain is L-cysteine:1D-myo-inositol 2-amino-2-deoxy-alpha-D-glucopyranoside ligase, found in Thermobispora bispora (strain ATCC 19993 / DSM 43833 / CBS 139.67 / JCM 10125 / KCTC 9307 / NBRC 14880 / R51).